Here is an 82-residue protein sequence, read N- to C-terminus: MSAKNNIQDQLLNTARKDKLDLTIYLLNGVPLKGKVVSFDNFTIVLEQENKQSLVYKHAISTIIPAKIIKLYTEETKDAVQG.

Positions 9-69 constitute a Sm domain; it reads DQLLNTARKD…ISTIIPAKII (61 aa).

This sequence belongs to the Hfq family. As to quaternary structure, homohexamer.

RNA chaperone that binds small regulatory RNA (sRNAs) and mRNAs to facilitate mRNA translational regulation in response to envelope stress, environmental stress and changes in metabolite concentrations. Also binds with high specificity to tRNAs. This Leptospira borgpetersenii serovar Hardjo-bovis (strain L550) protein is RNA-binding protein Hfq.